The following is a 123-amino-acid chain: Large ribosomal subunit protein bL12 (123 aa).

Belongs to the bacterial ribosomal protein bL12 family. As to quaternary structure, homodimer. Part of the ribosomal stalk of the 50S ribosomal subunit. Forms a multimeric L10(L12)X complex, where L10 forms an elongated spine to which 2 to 4 L12 dimers bind in a sequential fashion. Binds GTP-bound translation factors.

Its function is as follows. Forms part of the ribosomal stalk which helps the ribosome interact with GTP-bound translation factors. Is thus essential for accurate translation. This is Large ribosomal subunit protein bL12 from Rhodopseudomonas palustris (strain HaA2).